Reading from the N-terminus, the 645-residue chain is Envelope glycoprotein (645 aa).

The N-terminal stretch at 1–33 (MESPAFSKPLKDKINPWGPLIIMGILVRAGASV) is a signal peptide. Positions 32-237 (SVQRDSPHQV…QVLNVGPRVP (206 aa)) are receptor-binding domain (RBD). At 34-585 (QRDSPHQVFN…FNRSPWFTTL (552 aa)) the chain is on the extracellular side. N-linked (GlcNAc...) asparagine; by host glycosylation is found at asparagine 43 and asparagine 58. Cystine bridges form between cysteine 113/cysteine 130 and cysteine 122/cysteine 135. The tract at residues 259 to 286 (PRPPRPPPSGAASMVPGAPPPSQQPGTG) is disordered. N-linked (GlcNAc...) asparagine; by host glycosylation occurs at asparagine 301. Intrachain disulfides connect cysteine 311-cysteine 314, cysteine 311-cysteine 538, cysteine 341-cysteine 395, cysteine 360-cysteine 372, cysteine 402-cysteine 415, and cysteine 530-cysteine 537. A CXXC motif is present at residues 311–314 (CWLC). N-linked (GlcNAc...) asparagine; by host glycans are attached at residues asparagine 333 and asparagine 340. Asparagine 373 and asparagine 409 each carry an N-linked (GlcNAc...) asparagine; by host glycan. Residues 447-467 (VSLTLALLLGGLTMGGIAAGV) are fusion peptide. Positions 490-510 (DLGALEKSVSALEKSLTSLSE) form a coiled coil. Positions 513-529 (LQNRRGLDLLFLKEGGL) are immunosuppression. Positions 530–538 (CAALKEECC) match the CX6CC motif. A helical membrane pass occupies residues 586 to 606 (ISTIMGPLIVLLLILLFGPCI). Cysteine 605 carries S-palmitoyl cysteine; by host lipidation. At 607-640 (LNRLVQFVKDRISVVQALVLTQQYHQLKSIDPEE) the chain is on the cytoplasmic side. A YXXL motif; contains endocytosis signal motif is present at residues 630–633 (YHQL).

The mature envelope protein (Env) consists of a trimer of SU-TM heterodimers attached by a labile interchain disulfide bond. The activated Env consists of SU monomers and TM trimers. In terms of processing, specific enzymatic cleavages in vivo yield mature proteins. Envelope glycoproteins are synthesized as an inactive precursor that is N-glycosylated and processed likely by host cell furin or by a furin-like protease in the Golgi to yield the mature SU and TM proteins. The cleavage site between SU and TM requires the minimal sequence [KR]-X-[KR]-R. The R-peptide is released from the C-terminus of the cytoplasmic tail of the TM protein upon particle formation as a result of proteolytic cleavage by the viral protease. Cleavage of this peptide is required for TM to become fusogenic. The CXXC motif is highly conserved across a broad range of retroviral envelope proteins. It is thought to participate in the formation of a labile disulfide bond possibly with the CX6CC motif present in the transmembrane protein. Isomerization of the intersubunit disulfide bond to an SU intrachain disulfide bond is thought to occur upon receptor recognition in order to allow membrane fusion. Post-translationally, the transmembrane protein is palmitoylated. In terms of processing, the R-peptide is palmitoylated.

The protein localises to the virion membrane. It localises to the host cell membrane. The surface protein (SU) attaches the virus to the host cell by binding to its receptor. This interaction activates a thiol in a CXXC motif of the C-terminal domain, where the other Cys residue participates in the formation of the intersubunit disulfide. The activated thiol will attack the disulfide and cause its isomerization into a disulfide isomer within the motif. This leads to SU displacement and TM refolding, and is thought to activate its fusogenic potential by unmasking its fusion peptide. Fusion occurs at the host cell plasma membrane. Its function is as follows. The transmembrane protein (TM) acts as a class I viral fusion protein. Under the current model, the protein has at least 3 conformational states: pre-fusion native state, pre-hairpin intermediate state, and post-fusion hairpin state. During viral and target cell membrane fusion, the coiled coil regions (heptad repeats) assume a trimer-of-hairpins structure, positioning the fusion peptide in close proximity to the C-terminal region of the ectodomain. The formation of this structure appears to drive apposition and subsequent fusion of viral and target cell membranes. Membranes fusion leads to delivery of the nucleocapsid into the cytoplasm. The polypeptide is Envelope glycoprotein (env) (Xenotropic MuLV-related virus (isolate VP42) (XMRV)).